A 421-amino-acid chain; its full sequence is UPF0415 protein C7orf25 (421 aa).

It belongs to the UPF0415 family.

The sequence is that of UPF0415 protein C7orf25 (C7orf25) from Homo sapiens (Human).